A 241-amino-acid polypeptide reads, in one-letter code: Ribosome assembly factor mrt4 (241 aa).

It belongs to the universal ribosomal protein uL10 family. As to quaternary structure, associates with the pre-60S ribosomal particle.

The protein resides in the nucleus. It is found in the nucleolus. Its subcellular location is the cytoplasm. Functionally, component of the ribosome assembly machinery. Nuclear paralog of the ribosomal protein P0, it binds pre-60S subunits at an early stage of assembly in the nucleolus, and is replaced by P0 in cytoplasmic pre-60S subunits and mature 80S ribosomes. In Schizosaccharomyces pombe (strain 972 / ATCC 24843) (Fission yeast), this protein is Ribosome assembly factor mrt4.